The following is a 346-amino-acid chain: 4-hydroxy-2-oxovalerate aldolase 2 (346 aa).

The 253-residue stretch at 8–260 (VTVHDMTLRD…ETGVDVFKIQ (253 aa)) folds into the Pyruvate carboxyltransferase domain. 16–17 (RD) contributes to the substrate binding site. Mn(2+) is bound at residue Asp-17. His-20 serves as the catalytic Proton acceptor. Substrate contacts are provided by Ser-170 and His-199. Mn(2+) contacts are provided by His-199 and His-201. Substrate is bound at residue Tyr-290.

Belongs to the 4-hydroxy-2-oxovalerate aldolase family.

It catalyses the reaction (S)-4-hydroxy-2-oxopentanoate = acetaldehyde + pyruvate. The chain is 4-hydroxy-2-oxovalerate aldolase 2 (bphX3) from Metapseudomonas furukawaii (Pseudomonas furukawaii).